We begin with the raw amino-acid sequence, 342 residues long: Succinylglutamate desuccinylase (342 aa).

Zn(2+) is bound by residues His62, Glu65, and His158. The active site involves Glu222.

Belongs to the AspA/AstE family. Succinylglutamate desuccinylase subfamily. Zn(2+) is required as a cofactor.

The enzyme catalyses N-succinyl-L-glutamate + H2O = L-glutamate + succinate. The protein operates within amino-acid degradation; L-arginine degradation via AST pathway; L-glutamate and succinate from L-arginine: step 5/5. Functionally, transforms N(2)-succinylglutamate into succinate and glutamate. The polypeptide is Succinylglutamate desuccinylase (Shewanella frigidimarina (strain NCIMB 400)).